Consider the following 191-residue polypeptide: Large ribosomal subunit protein eL6 (191 aa).

This sequence belongs to the eukaryotic ribosomal protein eL6 family.

This is Large ribosomal subunit protein eL6 (RPL6) from Tetrahymena thermophila (strain SB210).